An 86-amino-acid chain; its full sequence is Large ribosomal subunit protein uL24c (86 aa).

The protein belongs to the universal ribosomal protein uL24 family. In terms of assembly, part of the 50S ribosomal subunit.

The protein localises to the plastid. The protein resides in the chloroplast. Functionally, one of two assembly initiator proteins, it binds directly to the 5'-end of the 23S rRNA, where it nucleates assembly of the 50S subunit. This Heterosigma akashiwo (strain NIES-293 / 8280G21-1) protein is Large ribosomal subunit protein uL24c (rpl24).